The primary structure comprises 129 residues: MRWQEFEGEVRRICEAHDFSTKFRFVFKDEEGRAEIDVVAERYGIVLCFDAKLYSASRYRASQLRREAEKHRRRCERFSALTGKRAIPVVVSLIDDSLRFHSGCIIVPYHSLNEFLTNLHFYLAEFGFL.

This is an uncharacterized protein from Archaeoglobus fulgidus (strain ATCC 49558 / DSM 4304 / JCM 9628 / NBRC 100126 / VC-16).